Consider the following 307-residue polypeptide: Dihydroorotate dehydrogenase A (fumarate) (307 aa).

FMN is bound by residues Ser-21 and 46–47; that span reads KT. Substrate-binding positions include Lys-46, 70–74, and Asn-130; that span reads NSVGL. Position 130 (Asn-130) interacts with FMN. Cys-133 serves as the catalytic Nucleophile. Positions 168 and 194 each coordinate FMN. 195–196 is a binding site for substrate; that stretch reads NT. Residues Gly-220, 246–247, and 268–269 each bind FMN; these read GG and GS.

The protein belongs to the dihydroorotate dehydrogenase family. Type 1 subfamily. In terms of assembly, homodimer. Requires FMN as cofactor.

Its subcellular location is the cytoplasm. The enzyme catalyses (S)-dihydroorotate + fumarate = orotate + succinate. It participates in pyrimidine metabolism; UMP biosynthesis via de novo pathway. Functionally, catalyzes the conversion of dihydroorotate to orotate with fumarate as the electron acceptor. The chain is Dihydroorotate dehydrogenase A (fumarate) (pyrD) from Lactobacillus delbrueckii subsp. bulgaricus (strain ATCC BAA-365 / Lb-18).